The following is a 1021-amino-acid chain: Sodium/potassium-transporting ATPase subunit alpha-1 (1021 aa).

The propeptide occupies 1–5 (MGKGV). A compositionally biased stretch (basic and acidic residues) spans 1–11 (MGKGVGRDKYE). Residues 1–37 (MGKGVGRDKYEPAAVSEHGDKKKAKKERDMDELKKEV) form a disordered region. The Cytoplasmic segment spans residues 6-85 (GRDKYEPAAV…NALTPPPTTP (80 aa)). Residue K9 is modified to N6-acetyllysine. Y10 carries the phosphotyrosine modification. Position 16 is a phosphoserine; by PKC (S16). The residue at position 21 (K21) is an N6-acetyllysine. Basic and acidic residues predominate over residues 26–37 (KERDMDELKKEV). Residues S38 and S45 each carry the phosphoserine modification. The phosphoinositide-3 kinase binding stretch occupies residues 80-82 (PPP). The chain crosses the membrane as a helical span at residues 86–106 (EWVKFCRQLFGGFSMLLWIGA). The Extracellular segment spans residues 107 to 129 (ILCFLAYGIQAATEEEPQNDNLY). The chain crosses the membrane as a helical span at residues 130–150 (LGVVLSAVVIITGCFSYYQEA). The Cytoplasmic segment spans residues 151 to 286 (KSSKIMESFK…GGQTPIAAEI (136 aa)). Residues 214–233 (SSLTGESEPQTRSPDFTNEN) are disordered. A Phosphoserine modification is found at S226. Y258 carries the post-translational modification Phosphotyrosine. Residues 287-306 (EHFIHIITGVAVFLGVSFFI) form a helical membrane-spanning segment. Topologically, residues 307–318 (LSLILEYTWLEA) are extracellular. A helical membrane pass occupies residues 319 to 336 (VIFLIGIIVANVPEGLLA). Residues 337 to 770 (TVTVCLTLTA…EEGRLIFDNL (434 aa)) are Cytoplasmic-facing. The active-site 4-aspartylphosphate intermediate is the D374. 2 positions are modified to phosphoserine: S450 and S482. An ATP-binding site is contributed by K485. Y540 bears the Phosphotyrosine mark. The segment at 594 to 715 (RAAVPDAVGK…QGAIVAVTGD (122 aa)) is mediates interaction with SCN7A. K659 is subject to N6-succinyllysine. 2 positions are modified to phosphoserine: S666 and S673. Positions 715 and 719 each coordinate Mg(2+). Residues 771–790 (KKSIAYTLTSNIPEITPFLI) traverse the membrane as a helical segment. Topologically, residues 791–800 (FIIANIPLPL) are extracellular. The chain crosses the membrane as a helical span at residues 801 to 821 (GTVTILCIDLGTDMVPAISLA). The Cytoplasmic segment spans residues 822 to 841 (YEQAESDIMKRQPRNPKTDK). A helical membrane pass occupies residues 842–864 (LVNEQLISMAYGQIGMIQALGGF). The Extracellular segment spans residues 865 to 916 (FTYFVILAENGFLPIHLLGLRVNWDDRWINDVEDSYGQQWTYEQRKIVEFTC). A helical transmembrane segment spans residues 917–936 (HTPFFVTIVVVQWADLVICK). The Cytoplasmic segment spans residues 937–949 (TRRNSVFQQGMKN). S941 is modified (phosphoserine; by PKA). A helical transmembrane segment spans residues 950–968 (KILIFGLFEETALAAFLSY). Topologically, residues 969 to 983 (CPGMGVALRMYPLKP) are extracellular. The helical transmembrane segment at 984–1004 (TWWFCAFPYSLLIFVYDEVRK) threads the bilayer. The Cytoplasmic portion of the chain corresponds to 1005-1021 (LIIRRRPGGWVEKETYY).

Belongs to the cation transport ATPase (P-type) (TC 3.A.3) family. Type IIC subfamily. As to quaternary structure, the sodium/potassium-transporting ATPase is composed of a catalytic alpha subunit, an auxiliary non-catalytic beta subunit and an additional regulatory subunit. Interacts with regulatory subunit FXYD1. Interacts with regulatory subunit FXYD3. Interacts with SIK1. Interacts with SLC35G1 and STIM1. Interacts with CLN3; this interaction regulates the sodium/potassium-transporting ATPase complex localization at the plasma membrane. Interacts with SCN7A; activates ATP1A1 P-type sodium:potassium-exchanging transporter activity which indirectly signals to nearby neurons to regulate sodium homeostasis. Phosphorylation on Tyr-10 modulates pumping activity. Phosphorylation of Ser-941 by PKA modulates the response of ATP1A1 to PKC. Dephosphorylation by protein phosphatase 2A (PP2A) following increases in intracellular sodium, leading to increase catalytic activity.

The protein resides in the cell membrane. Its subcellular location is the basolateral cell membrane. It is found in the sarcolemma. The protein localises to the cell projection. It localises to the axon. The protein resides in the melanosome. It carries out the reaction K(+)(out) + Na(+)(in) + ATP + H2O = K(+)(in) + Na(+)(out) + ADP + phosphate + H(+). Functionally, this is the catalytic component of the active enzyme, which catalyzes the hydrolysis of ATP coupled with the exchange of sodium and potassium ions across the plasma membrane. This action creates the electrochemical gradient of sodium and potassium ions, providing the energy for active transport of various nutrients. Could also be part of an osmosensory signaling pathway that senses body-fluid sodium levels and controls salt intake behavior as well as voluntary water intake to regulate sodium homeostasis. The chain is Sodium/potassium-transporting ATPase subunit alpha-1 (ATP1A1) from Sus scrofa (Pig).